We begin with the raw amino-acid sequence, 630 residues long: MFDAGDRGGGGGVVAVKRMKLCEEEEEEEEGMEVDEEEEEVGWVWRPPGGLAGEDEAAAWEGRAAAIVVSDAVEVDFPVIYVNAAFEAATGYRADEVLGRNCRFLQFRDPRAQRRHPLVDPMVVSEIRRCLNEGIEFQGELLNFRKDGAPLYNRLRLIPMHGDDGFVTHVIGIQLFSEANIDLSNVSYPVYKQQSNHRPNIQEINPASHEHIPKIQSSEYCCILQLSDEVLAHNILSRLSPRDVASIGSVCTRMHELTKNDHLRKMVCQNAWGRDVTVRLEMSTKMLGWGRLARELTTLEAASWRKFTVGGRVEPSRCNFSACAVGNRLVLFGGEGVNMQPMDDTFVLNLESAKPEWRRVKVSASPPGRWGHTLSWLNGSWLVVFGGCGQQGLLNDVFVLDLDAKQPTWREVASEGPPLPRSWHSSCTLDGSKLVVSGGCTESGVLLSDTFLLDLTKEKPAWKEIPTSWSPPSRLGHTLSVFGKTKLFMFGGLAKSGSLRLRSCDAYTMDAGEDSPQWRQLATTGFPSIGPPPRLDHVAVSLPCGRIIIFGGSIAGLHSPSQLFLLDPAEEKPTWRILNVPGQPPKFAWGHSTCVVGGTRVLVLGGHTGEEWILNELHELCLASRPDEDE.

Residues 54–126 (EDEAAAWEGR…PLVDPMVVSE (73 aa)) enclose the PAS domain. Cys102 bears the S-4a-FMN cysteine mark. In terms of domain architecture, F-box spans 220 to 268 (YCCILQLSDEVLAHNILSRLSPRDVASIGSVCTRMHELTKNDHLRKMVC). 5 Kelch repeats span residues 380–430 (SWLV…CTLD), 432–483 (SKLV…SVFG), 485–537 (TKLF…RLDH), 545–597 (GRII…CVVG), and 599–629 (TRVLVLGGHTGEEWILNELHELCLASRPDED).

It belongs to the ADAGIO family. FMN binds covalently to cysteine after exposure to blue light and is reversed in the dark.

The protein resides in the nucleus. It participates in protein modification; protein ubiquitination. Component of an E3 ubiquitin ligase complex that plays a central role in blue light-dependent circadian cycles. Acts as a blue light photoreceptor, due to the presence of FMN, that mediates light-regulated protein degradation of critical clock components by targeting them to the proteasome complex. The SCF(ADO3) E3 ubiquitin ligase complex is involved in the regulation of circadian clock-dependent processes including transition to flowering time, hypocotyl elongation, cotyledons and leaf movement rhythms. The sequence is that of Adagio-like protein 3 from Oryza sativa subsp. japonica (Rice).